The sequence spans 200 residues: 6,7-dimethyl-8-ribityllumazine synthase (200 aa).

Residues Trp-25, 59-61 (SWE), and 119-121 (VLI) contribute to the 5-amino-6-(D-ribitylamino)uracil site. 124 to 125 (ET) contributes to the (2S)-2-hydroxy-3-oxobutyl phosphate binding site. The active-site Proton donor is His-127. Residue Phe-152 participates in 5-amino-6-(D-ribitylamino)uracil binding. Position 166 (Arg-166) interacts with (2S)-2-hydroxy-3-oxobutyl phosphate.

The protein belongs to the DMRL synthase family. In terms of assembly, homopentamer.

It catalyses the reaction (2S)-2-hydroxy-3-oxobutyl phosphate + 5-amino-6-(D-ribitylamino)uracil = 6,7-dimethyl-8-(1-D-ribityl)lumazine + phosphate + 2 H2O + H(+). Its pathway is cofactor biosynthesis; riboflavin biosynthesis; riboflavin from 2-hydroxy-3-oxobutyl phosphate and 5-amino-6-(D-ribitylamino)uracil: step 1/2. Functionally, catalyzes the formation of 6,7-dimethyl-8-ribityllumazine by condensation of 5-amino-6-(D-ribitylamino)uracil with 3,4-dihydroxy-2-butanone 4-phosphate. This is the penultimate step in the biosynthesis of riboflavin. This is 6,7-dimethyl-8-ribityllumazine synthase from Pyricularia oryzae (strain 70-15 / ATCC MYA-4617 / FGSC 8958) (Rice blast fungus).